A 529-amino-acid chain; its full sequence is Glutamyl-tRNA(Gln) amidotransferase subunit B-2, chloroplastic/mitochondrial (529 aa).

The tract at residues 17–61 (STRVSLPRGSIPPPPTSSSSSSSSSREGRRPRFFSTTTTSAERPV) is disordered.

This sequence belongs to the GatB/GatE family. GatB subfamily. Subunit of the heterotrimeric GatCAB amidotransferase (AdT) complex, composed of A, B and C subunits.

Its subcellular location is the mitochondrion. It localises to the plastid. The protein localises to the chloroplast. It catalyses the reaction L-glutamyl-tRNA(Gln) + L-glutamine + ATP + H2O = L-glutaminyl-tRNA(Gln) + L-glutamate + ADP + phosphate + H(+). Functionally, allows the formation of correctly charged Gln-tRNA(Gln) through the transamidation of misacylated Glu-tRNA(Gln) in chloroplasts and mitochondria. The reaction takes place in the presence of glutamine and ATP through an activated gamma-phospho-Glu-tRNA(Gln). This Micromonas commoda (strain RCC299 / NOUM17 / CCMP2709) (Picoplanktonic green alga) protein is Glutamyl-tRNA(Gln) amidotransferase subunit B-2, chloroplastic/mitochondrial.